A 177-amino-acid polypeptide reads, in one-letter code: MITIDLAFSPASADLIDAADDEGTRSRLQEAGDWECELSAWIEALRQDHGNHCPEVVRTCDSLSLGISLLDDASIAELNLHWRQKPTPTDVLSFAALESEMPMVAGQELELGDIVVSVPTARRQALEQKHGLERELRWLVSHGLLHLLSWDHPDEDALAAMLQKQEHLLGMGSNVRS.

Residues His142, His146, and His152 each contribute to the Zn(2+) site.

The protein belongs to the endoribonuclease YbeY family. Zn(2+) is required as a cofactor.

Its subcellular location is the cytoplasm. Single strand-specific metallo-endoribonuclease involved in late-stage 70S ribosome quality control and in maturation of the 3' terminus of the 16S rRNA. The sequence is that of Endoribonuclease YbeY from Synechococcus sp. (strain CC9311).